A 311-amino-acid polypeptide reads, in one-letter code: Nucleotide-binding protein Acel_1111 (311 aa).

Residue Gly-30–Ser-37 coordinates ATP. Residue Asp-81 to Ser-84 coordinates GTP.

The protein belongs to the RapZ-like family.

Displays ATPase and GTPase activities. In Acidothermus cellulolyticus (strain ATCC 43068 / DSM 8971 / 11B), this protein is Nucleotide-binding protein Acel_1111.